The following is a 239-amino-acid chain: Large ribosomal subunit protein mL67 (239 aa).

This sequence belongs to the mitochondrion-specific ribosomal protein mL67 family. In terms of assembly, component of the mitochondrial large ribosomal subunit (mt-LSU).

It localises to the nucleus. It is found in the mitochondrion. In terms of biological role, component of the mitochondrial ribosome (mitoribosome), a dedicated translation machinery responsible for the synthesis of mitochondrial genome-encoded proteins, including at least some of the essential transmembrane subunits of the mitochondrial respiratory chain. The mitoribosomes are attached to the mitochondrial inner membrane and translation products are cotranslationally integrated into the membrane. mL67/MHR1 also has extraribosomal functions, being involved in regulation of mitochondrial DNA recombination, maintenance and repair, and generation of homoplasmic cells. mL67/MHR1 also acts as transcription factor involved in regulation of RNA polymerase II-dependent transcription. The polypeptide is Large ribosomal subunit protein mL67 (MHR1) (Candida albicans (strain SC5314 / ATCC MYA-2876) (Yeast)).